The following is a 134-amino-acid chain: Cytochrome b (134 aa).

3 helical membrane-spanning segments follow: residues 33–53, 77–98, and 113–133; these read FGSL…FLAM, WVLR…YVHV, and WNVG…GYVL. Heme b-binding residues include histidine 83 and histidine 97.

This sequence belongs to the cytochrome b family. In terms of assembly, the cytochrome bc1 complex contains 11 subunits: 3 respiratory subunits (MT-CYB, CYC1 and UQCRFS1), 2 core proteins (UQCRC1 and UQCRC2) and 6 low-molecular weight proteins (UQCRH/QCR6, UQCRB/QCR7, UQCRQ/QCR8, UQCR10/QCR9, UQCR11/QCR10 and a cleavage product of UQCRFS1). This cytochrome bc1 complex then forms a dimer. Requires heme b as cofactor.

It is found in the mitochondrion inner membrane. Functionally, component of the ubiquinol-cytochrome c reductase complex (complex III or cytochrome b-c1 complex) that is part of the mitochondrial respiratory chain. The b-c1 complex mediates electron transfer from ubiquinol to cytochrome c. Contributes to the generation of a proton gradient across the mitochondrial membrane that is then used for ATP synthesis. The sequence is that of Cytochrome b (MT-CYB) from Anoura caudifer (Hairy-legged long-tongued bat).